The primary structure comprises 95 residues: Co-chaperonin GroES (95 aa).

This sequence belongs to the GroES chaperonin family. As to quaternary structure, heptamer of 7 subunits arranged in a ring. Interacts with the chaperonin GroEL.

Its subcellular location is the cytoplasm. Together with the chaperonin GroEL, plays an essential role in assisting protein folding. The GroEL-GroES system forms a nano-cage that allows encapsulation of the non-native substrate proteins and provides a physical environment optimized to promote and accelerate protein folding. GroES binds to the apical surface of the GroEL ring, thereby capping the opening of the GroEL channel. The sequence is that of Co-chaperonin GroES from Streptococcus salivarius.